The chain runs to 1905 residues: Low-density lipoprotein receptor-related protein 4 (1905 aa).

The signal sequence occupies residues M1–A20. Over S21–H1723 the chain is Extracellular. LDL-receptor class A domains are found at residues A26–T67, T70–P106, E109–D144, K147–P183, P190–S226, P230–T266, M269–E305, and Q311–R350. Disulfide bonds link C27-C44, C34-C57, C51-C66, C71-C83, C78-C96, C90-C105, C110-C122, C117-C135, C129-C143, C148-C160, C155-C173, C167-C182, C191-C203, C198-C216, C210-C225, C231-C243, C238-C256, C250-C265, C270-C282, C277-C295, C289-C304, C312-C324, C319-C337, C331-C349, C358-C369, C365-C378, C380-C393, C399-C409, C405-C418, and C420-C433. N-linked (GlcNAc...) asparagine glycosylation occurs at N264. Residues G354–Q394 enclose the EGF-like 1; atypical domain. The 40-residue stretch at D395–K434 folds into the EGF-like 2; calcium-binding domain. LDL-receptor class B repeat units follow at residues E480–H522, D523–E565, G566–G609, R610–S652, and L653–Q693. Residue N498 is glycosylated (N-linked (GlcNAc...) asparagine). The region spanning G698 to A737 is the EGF-like 3 domain. 3 disulfide bridges follow: C702/C713, C709/C722, and C724/C736. N719 carries an N-linked (GlcNAc...) asparagine glycan. LDL-receptor class B repeat units lie at residues D785–T827, N828–G870, G871–S914, Q915–Q956, and R957–Q998. N901 carries N-linked (GlcNAc...) asparagine glycosylation. A glycan (N-linked (GlcNAc...) asparagine) is linked at N1077. 10 LDL-receptor class B repeats span residues G1093–G1135, R1136–M1178, G1179–S1222, S1223–S1263, Y1264–Q1306, G1397–A1439, R1440–K1482, G1483–T1526, R1527–W1568, and I1569–R1610. N-linked (GlcNAc...) asparagine glycosylation is found at N1415 and N1467. The interval P1659–R1696 is disordered. The segment covering L1671–P1690 has biased composition (low complexity). Residues V1724–L1746 form a helical membrane-spanning segment. Topologically, residues Y1747 to V1905 are cytoplasmic. The segment at S1853–V1905 is disordered. Polar residues predominate over residues E1872–T1881. Over residues P1882–V1905 the composition is skewed to basic and acidic residues.

This sequence belongs to the LDLR family. As to quaternary structure, homooligomer. Interacts with MUSK; the heterodimer forms an AGRIN receptor complex that binds AGRIN resulting in activation of MUSK. Interacts (via the extracellular domain) with SOST; the interaction facilitates the inhibition of Wnt signaling. Interacts with MESD; the interaction promotes glycosylation of LRP4 and its cell-surface expression. In terms of processing, N-glycosylation is required for cell surface location. In terms of tissue distribution, expressed in different regions of the brain, mainly in the olfactory bulb, at lower level in the cerebral cortex and hippocampus.

It is found in the cell membrane. Mediates SOST-dependent inhibition of bone formation. Functions as a specific facilitator of SOST-mediated inhibition of Wnt signaling. Plays a key role in the formation and the maintenance of the neuromuscular junction (NMJ), the synapse between motor neuron and skeletal muscle. Directly binds AGRIN and recruits it to the MUSK signaling complex. Mediates the AGRIN-induced phosphorylation of MUSK, the kinase of the complex. The activation of MUSK in myotubes induces the formation of NMJ by regulating different processes including the transcription of specific genes and the clustering of AChR in the postsynaptic membrane. Alternatively, may be involved in the negative regulation of the canonical Wnt signaling pathway, being able to antagonize the LRP6-mediated activation of this pathway. More generally, has been proposed to function as a cell surface endocytic receptor binding and internalizing extracellular ligands for degradation by lysosomes. Plays an essential role in the process of digit differentiation. This Rattus norvegicus (Rat) protein is Low-density lipoprotein receptor-related protein 4 (Lrp4).